Here is a 141-residue protein sequence, read N- to C-terminus: Nucleoside diphosphate kinase (141 aa).

Residues Lys-11, Phe-59, Arg-87, Thr-93, Arg-104, and Asn-114 each contribute to the ATP site. His-117 acts as the Pros-phosphohistidine intermediate in catalysis.

The protein belongs to the NDK family. As to quaternary structure, homotetramer. Requires Mg(2+) as cofactor.

The protein localises to the cytoplasm. The catalysed reaction is a 2'-deoxyribonucleoside 5'-diphosphate + ATP = a 2'-deoxyribonucleoside 5'-triphosphate + ADP. It carries out the reaction a ribonucleoside 5'-diphosphate + ATP = a ribonucleoside 5'-triphosphate + ADP. Major role in the synthesis of nucleoside triphosphates other than ATP. The ATP gamma phosphate is transferred to the NDP beta phosphate via a ping-pong mechanism, using a phosphorylated active-site intermediate. The polypeptide is Nucleoside diphosphate kinase (Pseudomonas fluorescens (strain Pf0-1)).